The chain runs to 374 residues: Quinolinate synthase (374 aa).

Iminosuccinate-binding residues include His-53 and Ser-70. [4Fe-4S] cluster is bound at residue Cys-116. Residues 148 to 150 (YMN) and Ser-169 each bind iminosuccinate. Cys-236 contacts [4Fe-4S] cluster. Iminosuccinate-binding positions include 262–264 (HPE) and Thr-279. Position 327 (Cys-327) interacts with [4Fe-4S] cluster.

This sequence belongs to the quinolinate synthase family. Type 3 subfamily. Requires [4Fe-4S] cluster as cofactor.

It localises to the cytoplasm. The enzyme catalyses iminosuccinate + dihydroxyacetone phosphate = quinolinate + phosphate + 2 H2O + H(+). It functions in the pathway cofactor biosynthesis; NAD(+) biosynthesis; quinolinate from iminoaspartate: step 1/1. In terms of biological role, catalyzes the condensation of iminoaspartate with dihydroxyacetone phosphate to form quinolinate. This Halobacterium salinarum (strain ATCC 29341 / DSM 671 / R1) protein is Quinolinate synthase.